The following is a 238-amino-acid chain: Cysteine-rich venom protein pseudechetoxin-like (238 aa).

A signal peptide spans 1-19 (MIAFIVLLSLAAVLQQSSG). Positions 20-28 (TVDFASESS) are excised as a propeptide. Residues 38–164 (VDKHNDLRRS…STKYLYVCQY (127 aa)) form the SCP domain. Disulfide bonds link cysteine 75–cysteine 153, cysteine 92–cysteine 165, cysteine 148–cysteine 162, cysteine 184–cysteine 191, cysteine 187–cysteine 196, cysteine 200–cysteine 233, cysteine 209–cysteine 227, and cysteine 218–cysteine 231. The ShKT domain occupies 200–233 (CKHNDDLSNCKPLAKKSKCQTEWIKSKCPATCFC).

It belongs to the CRISP family. Expressed by the venom gland.

It localises to the secreted. In terms of biological role, blocks olfactory (CNGA2) and retinal (CNGA1) CNG channel currents. Does not affect neither depolarization- nor caffeine-induced contraction of smooth muscle. The chain is Cysteine-rich venom protein pseudechetoxin-like from Oxyuranus microlepidotus (Inland taipan).